Here is a 475-residue protein sequence, read N- to C-terminus: Probable proline--tRNA ligase, mitochondrial (475 aa).

A mitochondrion-targeting transit peptide spans 1–29 (MEGLLTRCRTLSALAACSLRHCRYIIHKC).

It belongs to the class-II aminoacyl-tRNA synthetase family.

Its subcellular location is the mitochondrion matrix. It carries out the reaction tRNA(Pro) + L-proline + ATP = L-prolyl-tRNA(Pro) + AMP + diphosphate. In terms of biological role, mitochondrial aminoacyl-tRNA synthetase that catalyzes the specific attachment of the proline amino acid (aa) to the homologous transfer RNA (tRNA), further participating in protein synthesis. The reaction occurs in a two steps: proline is first activated by ATP to form Pro-AMP and then transferred to the acceptor end of tRNA(Pro). The chain is Probable proline--tRNA ligase, mitochondrial (Pars2) from Mus musculus (Mouse).